The primary structure comprises 72 residues: SPbeta prophage-derived uncharacterized protein YorV (72 aa).

The polypeptide is SPbeta prophage-derived uncharacterized protein YorV (yorV) (Bacillus subtilis (strain 168)).